The following is a 135-amino-acid chain: Large ribosomal subunit protein uL16c (135 aa).

Belongs to the universal ribosomal protein uL16 family. In terms of assembly, part of the 50S ribosomal subunit.

The protein localises to the plastid. It is found in the chloroplast. This is Large ribosomal subunit protein uL16c from Jasminum nudiflorum (Winter jasmine).